Reading from the N-terminus, the 115-residue chain is Large ribosomal subunit protein eL30 (115 aa).

The protein belongs to the eukaryotic ribosomal protein eL30 family. As to quaternary structure, component of the large ribosomal subunit.

The protein localises to the cytoplasm. Its function is as follows. Component of the large ribosomal subunit. The ribosome is a large ribonucleoprotein complex responsible for the synthesis of proteins in the cell. This is Large ribosomal subunit protein eL30 (RPL30) from Gallus gallus (Chicken).